The sequence spans 690 residues: MLRATAPCWFPPGYPEAKKVAEEAALEAPEFPLPSHQPAQSFGLPVPQMHNQASAFVDIQAEPQNRGPAVHPAWPKMVTEACYFPAQRGSACCLPAAPRLTERPSGVRISAPRKRKTIAQSSSPCLVTGCTDAKRTRVASSSQRSSGSKVGRQPGKTRNRSGMACKTTTTISSKRIVRRPSLPSLKKPIILRRSGCQVPTVLRRGYLQLFTEECLKFCASKQEAEEKALNEEKVAYDCSPNKNRYLNVVLNTLKRLKGLTPSSMPGLSRAALYSRLQEFLLSQDQLKENGYPFPHPERPGGAVLFTGQGKGPGDSSCRVCCRCGTEYLVSSSGRCVRDQLCYYHWGRVRSSQVAGGRVSQYTCCAAAPGSVGCQVAKQHVRDGRKDSLDGFVETFKKELSRDAYPGIYALDCEMCYTTHGLELTRVTVVDADMRVVYDTFVKPDNEIVDYNTRFSGVTEADVAKTSITLPQVQAILLSFFSAQTILIGHSLESDLLALKLIHSTVLDTAVLFPHYLGFPYKRSLRNLAADYLGQIIQDSQDGHNSSEDANACLQLVMWKVRQRAQIQPRHRSASPAALACPWPQAPSTTAISPESSPCPPRRKAKETGAVDGRRGQKAKSNPNRPLPVPRNPCRGPSGLSPSLCPSQTSVLPLIASRSTEPPLPVPRVPAAPPRACPHPSAHPRPLSLHH.

Disordered regions lie at residues 136–162 (TRVA…NRSG) and 567–690 (QPRH…SLHH). Over residues 585–595 (APSTTAISPES) the composition is skewed to polar residues. Residues 605 to 614 (KETGAVDGRR) show a composition bias toward basic and acidic residues. The GOR14-1 epitope stretch occupies residues 612–626 (GRRGQKAKSNPNRPL). Low complexity predominate over residues 631-646 (NPCRGPSGLSPSLCPS). Residues 661 to 682 (PPLPVPRVPAAPPRACPHPSAH) show a composition bias toward pro residues.

This sequence belongs to the REXO1/REXO3 family.

Its subcellular location is the cytoplasm. It is found in the nucleus. The polypeptide is Exonuclease GOR (REXO1L1) (Pan troglodytes (Chimpanzee)).